Consider the following 721-residue polypeptide: Exo beta-1,2-glucooligosaccharide sophorohydrolase (non-reducing end) (721 aa).

The first 18 residues, 1 to 18 (MKHIALLTTLLLSASLQA), serve as a signal peptide directing secretion. The Glycoamylase-like domain occupies 474–708 (NHKLIGWNET…LLWNLFMSHP (235 aa)).

In terms of assembly, monomer.

Its subcellular location is the periplasm. The catalysed reaction is [(1-&gt;2)-beta-D-glucosyl](n) + H2O = [(1-&gt;2)-beta-D-glucosyl](n-2) + sophorose. Its function is as follows. Catalyzes the hydrolysis of linear beta-1,2-glucan and beta-1,2-glucooligosaccharides with degrees of polymerization (DPs) greater than or equal to 4, to produce sophorose. The best substrates are tetra- and pentasaccharides. Acts as an exo-type enzyme that releases sophorose from the non-reducing end of the substrate. It cannot hydrolyze cyclic beta-1,2-glucans. This Parabacteroides distasonis (strain ATCC 8503 / DSM 20701 / CIP 104284 / JCM 5825 / NCTC 11152) protein is Exo beta-1,2-glucooligosaccharide sophorohydrolase (non-reducing end).